A 464-amino-acid chain; its full sequence is Argininosuccinate lyase (464 aa).

Belongs to the lyase 1 family. Argininosuccinate lyase subfamily.

The protein localises to the cytoplasm. It carries out the reaction 2-(N(omega)-L-arginino)succinate = fumarate + L-arginine. It participates in amino-acid biosynthesis; L-arginine biosynthesis; L-arginine from L-ornithine and carbamoyl phosphate: step 3/3. The protein is Argininosuccinate lyase of Pseudomonas fluorescens (strain SBW25).